The chain runs to 340 residues: 4-amino-5-hydroxymethyl-2-methylpyrimidine phosphate synthase THI13 (340 aa).

An N6-(pyridoxal phosphate)lysine modification is found at Lys-62. His-66 is a catalytic residue. 115 to 118 (GEFG) is a pyridoxal 5'-phosphate binding site. The CCCFC; essential for catalytic activity, may be the site of iron coordination signature appears at 195-199 (CCCFC).

The protein belongs to the NMT1/THI5 family. In terms of assembly, homodimer. Fe cation is required as a cofactor.

It catalyses the reaction N(6)-(pyridoxal phosphate)-L-lysyl-[4-amino-5-hydroxymethyl-2-methylpyrimidine phosphate synthase] + L-histidyl-[4-amino-5-hydroxymethyl-2-methylpyrimidine phosphate synthase] + 2 Fe(3+) + 4 H2O = L-lysyl-[4-amino-5-hydroxymethyl-2-methylpyrimidine phosphate synthase] + (2S)-2-amino-5-hydroxy-4-oxopentanoyl-[4-amino-5-hydroxymethyl-2-methylpyrimidine phosphate synthase] + 4-amino-2-methyl-5-(phosphooxymethyl)pyrimidine + 3-oxopropanoate + 2 Fe(2+) + 2 H(+). It participates in cofactor biosynthesis; thiamine diphosphate biosynthesis. Responsible for the formation of the pyrimidine heterocycle in the thiamine biosynthesis pathway. Catalyzes the formation of hydroxymethylpyrimidine phosphate (HMP-P) from histidine and pyridoxal phosphate (PLP). The protein uses PLP and the active site histidine to form HMP-P, generating an inactive enzyme. The enzyme can only undergo a single turnover, which suggests it is a suicide enzyme. The polypeptide is 4-amino-5-hydroxymethyl-2-methylpyrimidine phosphate synthase THI13 (Saccharomyces cerevisiae (strain ATCC 204508 / S288c) (Baker's yeast)).